Consider the following 184-residue polypeptide: Lactoylglutathione lyase (184 aa).

Residue A2 is modified to N-acetylalanine. C19 and C20 are oxidised to a cystine. Residues 31 to 177 (LLQQTMLRIK…DGYWIEILNP (147 aa)) form the VOC domain. The substrate site is built by Q34 and R38. Q34 is a binding site for Zn(2+). The residue at position 88 (K88) is an N6-succinyllysine. E100 contacts Zn(2+). N104 provides a ligand contact to substrate. T107 is modified (phosphothreonine). Residues R123 and H127 each contribute to the substrate site. A Zn(2+)-binding site is contributed by H127. C139 is subject to S-glutathionyl cysteine. N6-acetyllysine; alternate is present on K148. K148 is modified (N6-succinyllysine; alternate). 157–158 (KM) is a substrate binding site. A Zn(2+)-binding site is contributed by E173. E173 acts as the Proton donor/acceptor in catalysis.

It belongs to the glyoxalase I family. In terms of assembly, homodimer. The cofactor is Zn(2+). Post-translationally, glutathionylation at Cys-139 inhibits enzyme activity. In terms of processing, phosphorylated at Thr-107 in the presence of CaMK2. However, this is a consensus site for phosphorylation by CK2 so phosphorylation may be mediated by CK2 rather than CaMK2. Phosphorylation is induced by TNF and suppresses the TNF-induced transcriptional activity of NF-kappa-B. Exists in a nitric oxide (NO)-modified form. The exact nature of the modification is unknown, but it suppresses the TNF-induced transcriptional activity of NF-kappa-B.

It catalyses the reaction (R)-S-lactoylglutathione = methylglyoxal + glutathione. Its pathway is secondary metabolite metabolism; methylglyoxal degradation; (R)-lactate from methylglyoxal: step 1/2. Its activity is regulated as follows. Subject to competitive inhibition by methyl-gerfelin. In terms of biological role, catalyzes the conversion of hemimercaptal, formed from methylglyoxal and glutathione, to S-lactoylglutathione. Involved in the regulation of TNF-induced transcriptional activity of NF-kappa-B. Required for normal osteoclastogenesis. The chain is Lactoylglutathione lyase (Glo1) from Mus musculus (Mouse).